We begin with the raw amino-acid sequence, 582 residues long: Inositol transporter 4 (582 aa).

Transmembrane regions (helical) follow at residues Gly35–Ile55, Ser70–Ile90, Val105–Val125, Ile128–Ala148, Gly162–Thr182, Trp188–Pro208, Phe290–Ala310, Ala317–Val337, Leu345–Ser365, Phe456–Gly476, Leu494–Phe514, and Gly525–Val545.

The protein belongs to the major facilitator superfamily. Sugar transporter (TC 2.A.1.1) family. In terms of tissue distribution, highly expressed in pollen and phloem companion cells.

It localises to the cell membrane. In terms of biological role, plasma membrane inositol-proton symporter. Mediates high-affinity myoinositol-proton symport across the plasma membrane. Active with myoinositol, scylloinositol and D-chiroinositol. Low activity with mucoinositol and alloinositol. The polypeptide is Inositol transporter 4 (INT4) (Arabidopsis thaliana (Mouse-ear cress)).